Here is a 461-residue protein sequence, read N- to C-terminus: Propionyl-CoA carboxylase regulator (461 aa).

One can recognise an HTH cro/C1-type domain in the interval 11–65 (LRELRVKLGLTQKVFAERLGASLPYLNQMENNHRPVSATVVLALAQEFGVDVTKL). The segment at residues 22 to 41 (QKVFAERLGASLPYLNQMEN) is a DNA-binding region (H-T-H motif).

The protein belongs to the short-chain fatty acyl-CoA assimilation regulator (ScfR) family.

Functionally, transcriptional regulator that controls propionyl-CoA assimilation through the methylmalonyl-CoA pathway via regulation of pccB expression. The protein is Propionyl-CoA carboxylase regulator of Cereibacter sphaeroides (strain ATCC 17023 / DSM 158 / JCM 6121 / CCUG 31486 / LMG 2827 / NBRC 12203 / NCIMB 8253 / ATH 2.4.1.) (Rhodobacter sphaeroides).